Reading from the N-terminus, the 258-residue chain is MLIIISPAKTLDYQSPLATTKFSQPEMLDKSQALIEICRELTPAQISSLMGISDKLAGLNAARFSEWQPDFTPANARQAILAFKGDVYTGMQAESFSEADFDFAQQHLRMLSGLYGLLRPLDLMQPYRLEMGTKLANPRGKDLYAFWGDQITEKLNQALELQGDNILINLASDEYFKAVKPAKLSGSLIKPVFLDEKNGKYKIISFYAKKARGLMSRFIIQNKLTKPEQLVDFNLEGYEFDAGLSAKNELVFKRAEQH.

It belongs to the UPF0246 family.

The polypeptide is UPF0246 protein YPK_3600 (Yersinia pseudotuberculosis serotype O:3 (strain YPIII)).